The primary structure comprises 90 residues: Mitochondrial import inner membrane translocase subunit Tim9 (90 aa).

The Twin CX3C motif signature appears at 24-48 (CFNSCVNEFGSRTVSGKEESCANNC). 2 disulfides stabilise this stretch: C24/C48 and C28/C44.

This sequence belongs to the small Tim family. Heterohexamer; composed of 3 copies of tim-9/tin-9.1 and 3 copies of tim-10/tin-10, named soluble 70 kDa complex. The complex associates with the tim-22 component of the TIM22 complex. Interacts with multi-pass transmembrane proteins in transit.

It localises to the mitochondrion inner membrane. In terms of biological role, mitochondrial intermembrane chaperone that participates in the import and insertion of multi-pass transmembrane proteins into the mitochondrial inner membrane. May also be required for the transfer of beta-barrel precursors from the TOM complex to the sorting and assembly machinery (SAM complex) of the outer membrane. Acts as a chaperone-like protein that protects the hydrophobic precursors from aggregation and guide them through the mitochondrial intermembrane space. This is Mitochondrial import inner membrane translocase subunit Tim9 (tin-9.1) from Caenorhabditis elegans.